A 285-amino-acid chain; its full sequence is Undecaprenyl-diphosphatase (285 aa).

7 helical membrane passes run 40–60, 89–109, 137–157, 171–191, 209–229, 241–261, and 265–285; these read GPLI…VYFF, LFWW…AIKL, DLIA…DWLG, GLIV…RSGV, FSFL…VPEI, LIAG…LMNF, and ASML…LAFF.

This sequence belongs to the UppP family.

The protein resides in the cell inner membrane. The catalysed reaction is di-trans,octa-cis-undecaprenyl diphosphate + H2O = di-trans,octa-cis-undecaprenyl phosphate + phosphate + H(+). Its function is as follows. Catalyzes the dephosphorylation of undecaprenyl diphosphate (UPP). Confers resistance to bacitracin. The polypeptide is Undecaprenyl-diphosphatase (Erythrobacter litoralis (strain HTCC2594)).